The following is a 771-amino-acid chain: Protein translocase subunit SecA 2 (771 aa).

Residues Gln91, Gly109–Thr113, and Asp496 contribute to the ATP site.

It belongs to the SecA family. Monomer and homodimer. Part of the essential Sec protein translocation apparatus which comprises SecA, SecYEG and auxiliary proteins SecDF. Other proteins may also be involved.

Its subcellular location is the cell membrane. It localises to the cytoplasm. The enzyme catalyses ATP + H2O + cellular proteinSide 1 = ADP + phosphate + cellular proteinSide 2.. Its function is as follows. Part of the Sec protein translocase complex. Interacts with the SecYEG preprotein conducting channel. Has a central role in coupling the hydrolysis of ATP to the transfer of proteins into and across the cell membrane, serving as an ATP-driven molecular motor driving the stepwise translocation of polypeptide chains across the membrane. This chain is Protein translocase subunit SecA 2, found in Corynebacterium jeikeium (strain K411).